Reading from the N-terminus, the 690-residue chain is Translation initiation factor IF-2 (690 aa).

The tr-type G domain occupies 178 to 346 (PRPPVVTVMG…MILLVAEMNE (169 aa)). A G1 region spans residues 187–194 (GHVDHGKT). A GTP-binding site is contributed by 187 to 194 (GHVDHGKT). Positions 212-216 (GITQS) are G2. The segment at 233 to 236 (DTPG) is G3. GTP is bound by residues 233-237 (DTPGH) and 287-290 (NKID). The segment at 287-290 (NKID) is G4. A G5 region spans residues 324–326 (SAR).

This sequence belongs to the TRAFAC class translation factor GTPase superfamily. Classic translation factor GTPase family. IF-2 subfamily.

It localises to the cytoplasm. In terms of biological role, one of the essential components for the initiation of protein synthesis. Protects formylmethionyl-tRNA from spontaneous hydrolysis and promotes its binding to the 30S ribosomal subunits. Also involved in the hydrolysis of GTP during the formation of the 70S ribosomal complex. The chain is Translation initiation factor IF-2 from Thermotoga sp. (strain RQ2).